The chain runs to 621 residues: Frizzled and smoothened-like protein H (621 aa).

A signal peptide spans 1–21 (MNLKFYNLIFFISFLICCIHG). Residues 22-246 (QRYLPVEGGK…VWNQIFKIND (225 aa)) lie on the Extracellular side of the membrane. The region spanning 27-166 (VEGGKCEKYI…IEWVKYNLTI (140 aa)) is the FZ domain. Cystine bridges form between C32–C103 and C46–C96. N-linked (GlcNAc...) asparagine glycosylation is found at N60, N107, N163, N176, and N206. Residues 247-267 (VLSSISLACTLILLFTFGILN) form a helical membrane-spanning segment. Topologically, residues 268–277 (PKLNRFDKKN) are cytoplasmic. Residues 278-298 (LFFIAGVFGMSVSGVLIAANG) traverse the membrane as a helical segment. Topologically, residues 299–318 (SEKTVCPTPERYAVNTDRVC) are extracellular. A helical transmembrane segment spans residues 319–339 (VASGFLVHFSALFAILWWTIG). The Cytoplasmic segment spans residues 340–359 (LADVYYGIKFVGKKIKIKVR). A helical membrane pass occupies residues 360-380 (YYLLATLTISLAFTLVPLGTG). Topologically, residues 381 to 400 (QYQAGLSNVMCFLKDEIYQS) are extracellular. A helical transmembrane segment spans residues 401-421 (MTFFVPLGICLTMGTILMILV). The Cytoplasmic portion of the chain corresponds to 422–464 (MREIYVIVKSNSTSSSFSSSSSKSKSKSKSSDSISYLKLQVKP). A helical membrane pass occupies residues 465 to 485 (MLNIILFYFTFLYLFLFVRVI). Residues 486–520 (NSRYQEYEDSAIPYMLCLAKGGGDSCRLKGPSAGS) lie on the Extracellular side of the membrane. The chain crosses the membrane as a helical span at residues 521-541 (LGYFAYCLRIYGIYLFIISFL). The Cytoplasmic portion of the chain corresponds to 542–621 (SSRTIKIWKE…RNYNTDDDDL (80 aa)). Low complexity predominate over residues 575-594 (FSSSKNTSTTQNSTLNNTES). Residues 575–603 (FSSSKNTSTTQNSTLNNTESDTSKRGNSS) form a disordered region.

This sequence belongs to the G-protein coupled receptor Fz/Smo family.

The protein localises to the membrane. The sequence is that of Frizzled and smoothened-like protein H (fslH) from Dictyostelium discoideum (Social amoeba).